Consider the following 283-residue polypeptide: Protein/nucleic acid deglycase HchA (283 aa).

The Zn(2+) site is built by His86, Glu91, and His123. Cys185 serves as the catalytic Nucleophile.

Belongs to the peptidase C56 family. HchA subfamily. In terms of assembly, homodimer.

It localises to the cytoplasm. It carries out the reaction N(omega)-(1-hydroxy-2-oxopropyl)-L-arginyl-[protein] + H2O = lactate + L-arginyl-[protein] + H(+). It catalyses the reaction N(6)-(1-hydroxy-2-oxopropyl)-L-lysyl-[protein] + H2O = lactate + L-lysyl-[protein] + H(+). The enzyme catalyses S-(1-hydroxy-2-oxopropyl)-L-cysteinyl-[protein] + H2O = lactate + L-cysteinyl-[protein] + H(+). The catalysed reaction is N(omega)-(1-hydroxy-2-oxoethyl)-L-arginyl-[protein] + H2O = L-arginyl-[protein] + glycolate + H(+). It carries out the reaction N(6)-(1-hydroxy-2-oxoethyl)-L-lysyl-[protein] + H2O = glycolate + L-lysyl-[protein] + H(+). It catalyses the reaction S-(1-hydroxy-2-oxoethyl)-L-cysteinyl-[protein] + H2O = glycolate + L-cysteinyl-[protein] + H(+). The enzyme catalyses N(2)-(1-hydroxy-2-oxopropyl)-dGTP + H2O = lactate + dGTP + H(+). The catalysed reaction is N(2)-(1-hydroxy-2-oxopropyl)-GTP + H2O = lactate + GTP + H(+). It carries out the reaction N(2)-(1-hydroxy-2-oxopropyl)-GDP + H2O = lactate + GDP + H(+). It catalyses the reaction N(2)-(1-hydroxy-2-oxopropyl)-GMP + H2O = lactate + GMP + H(+). The enzyme catalyses N(2)-(1-hydroxy-2-oxoethyl)-dGTP + H2O = dGTP + glycolate + H(+). The catalysed reaction is N(2)-(1-hydroxy-2-oxoethyl)-GTP + H2O = glycolate + GTP + H(+). It carries out the reaction N(2)-(1-hydroxy-2-oxoethyl)-GDP + H2O = glycolate + GDP + H(+). It catalyses the reaction N(2)-(1-hydroxy-2-oxoethyl)-GMP + H2O = glycolate + GMP + H(+). The enzyme catalyses an N(2)-(1-hydroxy-2-oxopropyl)-guanosine in RNA + H2O = a guanosine in RNA + lactate + H(+). The catalysed reaction is an N(2)-(1-hydroxy-2-oxopropyl)-2'-deoxyguanosine in DNA + H2O = a 2'-deoxyguanosine in DNA + lactate + H(+). It carries out the reaction an N(2)-(1-hydroxy-2-oxoethyl)-guanosine in RNA + H2O = a guanosine in RNA + glycolate + H(+). It catalyses the reaction an N(2)-(1-hydroxy-2-oxoethyl)-2'-deoxyguanosine in DNA + H2O = a 2'-deoxyguanosine in DNA + glycolate + H(+). Protein and nucleotide deglycase that catalyzes the deglycation of the Maillard adducts formed between amino groups of proteins or nucleotides and reactive carbonyl groups of glyoxals. Thus, functions as a protein deglycase that repairs methylglyoxal- and glyoxal-glycated proteins, and releases repaired proteins and lactate or glycolate, respectively. Deglycates cysteine, arginine and lysine residues in proteins, and thus reactivates these proteins by reversing glycation by glyoxals. Acts on early glycation intermediates (hemithioacetals and aminocarbinols), preventing the formation of Schiff bases and advanced glycation endproducts (AGE). Also functions as a nucleotide deglycase able to repair glycated guanine in the free nucleotide pool (GTP, GDP, GMP, dGTP) and in DNA and RNA. Is thus involved in a major nucleotide repair system named guanine glycation repair (GG repair), dedicated to reversing methylglyoxal and glyoxal damage via nucleotide sanitization and direct nucleic acid repair. Plays an important role in protecting cells from carbonyl stress. This chain is Protein/nucleic acid deglycase HchA, found in Escherichia coli O7:K1 (strain IAI39 / ExPEC).